Here is a 974-residue protein sequence, read N- to C-terminus: UvrABC system protein A (974 aa).

34-41 serves as a coordination point for ATP; that stretch reads GLSGSGKS. 2 ABC transporter domains span residues 331–610 and 630–959; these read WARS…TNSL and ISKT…QFLK. 663–670 serves as a coordination point for ATP; sequence GVSGGGKS. The C4-type zinc-finger motif lies at 762-788; the sequence is CEACQGDGVIKIEMHFLPDVYVTCDVC.

Belongs to the ABC transporter superfamily. UvrA family. In terms of assembly, forms a heterotetramer with UvrB during the search for lesions.

It localises to the cytoplasm. Functionally, the UvrABC repair system catalyzes the recognition and processing of DNA lesions. UvrA is an ATPase and a DNA-binding protein. A damage recognition complex composed of 2 UvrA and 2 UvrB subunits scans DNA for abnormalities. When the presence of a lesion has been verified by UvrB, the UvrA molecules dissociate. The polypeptide is UvrABC system protein A (Brucella suis biovar 1 (strain 1330)).